The following is a 422-amino-acid chain: Protein arginine methyltransferase NDUFAF7, mitochondrial (422 aa).

The N-terminal 28 residues, 1-28 (MRTLLRLKRLMPEVLWTKRSCSSSSINK), are a transit peptide targeting the mitochondrion.

Belongs to the NDUFAF7 family.

The protein resides in the mitochondrion. It catalyses the reaction L-arginyl-[protein] + 2 S-adenosyl-L-methionine = N(omega),N(omega)'-dimethyl-L-arginyl-[protein] + 2 S-adenosyl-L-homocysteine + 2 H(+). In terms of biological role, arginine methyltransferase involved in the assembly or stability of mitochondrial NADH:ubiquinone oxidoreductase complex (complex I). Acts by mediating symmetric dimethylation of 'Arg-118' of ndufs2 after it assembles into the complex I, stabilizing the early intermediate complex. This is Protein arginine methyltransferase NDUFAF7, mitochondrial from Danio rerio (Zebrafish).